We begin with the raw amino-acid sequence, 499 residues long: C2H2-type transcription factor RPN4 (499 aa).

Residues 329 to 397 (QTTKKDNSKP…TTKSTHTHSK (69 aa)) are disordered. The segment covering 331 to 344 (TKKDNSKPVEKTVV) has biased composition (basic and acidic residues). Polar residues predominate over residues 345 to 363 (EKTSSVTKAGSNHSRSTLA). A C2H2-type zinc finger spans residues 405–436 (FVCELVNSVTNEVCGAQFSRTYDLTRHQNTIH).

Its subcellular location is the nucleus. In terms of biological role, transcription factor that acts as a transcriptional activator of a number of genes encoding proteasomal subunits. Plays a role in ergosterol and plasma membrane homeostasis, and subsequent azole resistance. Regulates the expression of 212 genes, activating 80 genes and repressing, likely in an indirect fashion, 132 genes. Targets comprise several proteasome and ergosterol biosynthesis genes, including ERG1, ERG2, ERG3, and ERG11. Directly regulates ERG11 expression through the 3'-TTGCAAA-5' binding motif. The sequence is that of C2H2-type transcription factor RPN4 from Candida glabrata (strain ATCC 2001 / BCRC 20586 / JCM 3761 / NBRC 0622 / NRRL Y-65 / CBS 138) (Yeast).